A 67-amino-acid polypeptide reads, in one-letter code: Probable tautomerase K2 (67 aa).

The Proton acceptor; via imino nitrogen role is filled by proline 2.

The protein belongs to the 4-oxalocrotonate tautomerase family.

The protein is Probable tautomerase K2 of Dickeya dadantii (strain 3937) (Erwinia chrysanthemi (strain 3937)).